Here is a 1026-residue protein sequence, read N- to C-terminus: SWI/SNF-related matrix-associated actin-dependent regulator of chromatin subfamily A containing DEAD/H box 1 (1026 aa).

An N-acetylmethionine modification is found at Met1. The tract at residues 1–82 (MNLFNLDRFR…DNERKASISY (82 aa)) is disordered. Over residues 7-19 (DRFRFEKRNKIEE) the composition is skewed to basic and acidic residues. The residue at position 54 (Thr54) is a Phosphothreonine. Ser57 carries the post-translational modification Phosphoserine. The residue at position 71 (Thr71) is a Phosphothreonine. Lys77 is covalently cross-linked (Glycyl lysine isopeptide (Lys-Gly) (interchain with G-Cter in SUMO2)). Position 79 is a phosphoserine (Ser79). Lys84 participates in a covalent cross-link: Glycyl lysine isopeptide (Lys-Gly) (interchain with G-Cter in SUMO2). Phosphoserine occurs at positions 124, 127, 132, 146, and 152. The 43-residue stretch at 157-199 (LKDAKLQTLKELFPQRSDNDLLKLIESTSTMDGAIAAALLMFG) folds into the CUE 1 domain. Disordered regions lie at residues 203–251 (GGPR…NWEK) and 302–328 (SQSE…KTKL). A phosphoserine mark is found at Ser211 and Ser214. Tyr217 bears the Phosphotyrosine mark. Basic and acidic residues predominate over residues 226-238 (QSIKKTRLDHGEE). Residues Ser239 and Ser242 each carry the phosphoserine modification. The region spanning 251-294 (KQESIVLKLQKEFPNFDKQELREVLKEHEWMYTEALESLKVFAE) is the CUE 2 domain. At Ser302 the chain carries Phosphoserine. The segment covering 314-323 (SRSQNYPKNA) has biased composition (polar residues). Residue Lys335 forms a Glycyl lysine isopeptide (Lys-Gly) (interchain with G-Cter in SUMO2) linkage. The tract at residues 354–373 (VVEDSEYDSGSDVGSSLDED) is disordered. Residue Lys471 forms a Glycyl lysine isopeptide (Lys-Gly) (interchain with G-Cter in SUMO2) linkage. In terms of domain architecture, Helicase ATP-binding spans 509–677 (ALVHKHGLNG…MSLLNFVMPH (169 aa)). 521–529 (ADEMGLGKT) contacts ATP. A DEGH box motif is present at residues 628-631 (DEGH). The Nuclear localization signal signature appears at 721–738 (RRVKEEVLKQLPPKKDRI). Lys724 participates in a covalent cross-link: Glycyl lysine isopeptide (Lys-Gly) (interchain with G-Cter in SUMO2). Positions 858–1010 (VLGCILSELK…MTTVDEGDEG (153 aa)) constitute a Helicase C-terminal domain. 897–904 (YLRLDGKT) contacts ATP. A Glycyl lysine isopeptide (Lys-Gly) (interchain with G-Cter in SUMO2) cross-link involves residue Lys996. A DEGD box motif is present at residues 1005–1008 (DEGD).

This sequence belongs to the SNF2/RAD54 helicase family. Binds to DNA preferentially in the vicinity of transcriptional start sites. Interacts with MSH2 and TRIM28. Part of a complex composed of TRIM28, HDAC1, HDAC2 and EHMT2. Interacts with PCNA. In terms of tissue distribution, isoform 1 is expressed ubiquitously. Isoform 3 is expressed mainly in skin and esophagus. Expressed in fibroblasts and keratinocytes (at protein level).

Its subcellular location is the nucleus. It localises to the chromosome. The enzyme catalyses ATP + H2O = ADP + phosphate + H(+). In terms of biological role, DNA helicase that possesses intrinsic ATP-dependent nucleosome-remodeling activity and is both required for DNA repair and heterochromatin organization. Promotes DNA end resection of double-strand breaks (DSBs) following DNA damage: probably acts by weakening histone DNA interactions in nucleosomes flanking DSBs. Required for the restoration of heterochromatin organization after replication. Acts at replication sites to facilitate the maintenance of heterochromatin by directing H3 and H4 histones deacetylation, H3 'Lys-9' trimethylation (H3K9me3) and restoration of silencing. This chain is SWI/SNF-related matrix-associated actin-dependent regulator of chromatin subfamily A containing DEAD/H box 1, found in Homo sapiens (Human).